A 348-amino-acid chain; its full sequence is ELAV-like protein 3 (348 aa).

3 RRM domains span residues 34-112, 120-200, and 265-343; these read TNLI…YARP, ANLY…FANN, and WCIF…FKTS.

The protein belongs to the RRM elav family. In terms of tissue distribution, expression is neural-specific in both embryos and adults. Expressed from neurula stage onwards in primary motor-, inter- and sensory-neurons. Expressed in the closing neural tube and motor neurons of stage 18 embryos, and primarily in the ventricular zone and dorsal region of the tailbud and adult brain. Expressed from stage 26 onwards in the differentiating ganglion cell layer of the retina, extending to the inner nuclear layer at later stages.

Its function is as follows. RNA-binding protein that binds to AU-rich element (ARE) sequences of target mRNAs. May also bind poly-A tracts via RRM 3. May be involved in neuronal differentiation and maintenance. This is ELAV-like protein 3 (elavl3) from Xenopus laevis (African clawed frog).